We begin with the raw amino-acid sequence, 276 residues long: Formamidopyrimidine-DNA glycosylase (276 aa).

The active-site Schiff-base intermediate with DNA is proline 2. Catalysis depends on glutamate 3, which acts as the Proton donor. The active-site Proton donor; for beta-elimination activity is the lysine 58. Residues histidine 92, arginine 111, and lysine 154 each contribute to the DNA site. An FPG-type zinc finger spans residues 239 to 273 (QVYGHAGEECSSCGTILEKIKVNGRGTTFCPHCQV). Arginine 263 (proton donor; for delta-elimination activity) is an active-site residue.

Belongs to the FPG family. In terms of assembly, monomer. Zn(2+) serves as cofactor.

It catalyses the reaction Hydrolysis of DNA containing ring-opened 7-methylguanine residues, releasing 2,6-diamino-4-hydroxy-5-(N-methyl)formamidopyrimidine.. The catalysed reaction is 2'-deoxyribonucleotide-(2'-deoxyribose 5'-phosphate)-2'-deoxyribonucleotide-DNA = a 3'-end 2'-deoxyribonucleotide-(2,3-dehydro-2,3-deoxyribose 5'-phosphate)-DNA + a 5'-end 5'-phospho-2'-deoxyribonucleoside-DNA + H(+). In terms of biological role, involved in base excision repair of DNA damaged by oxidation or by mutagenic agents. Acts as a DNA glycosylase that recognizes and removes damaged bases. Has a preference for oxidized purines, such as 7,8-dihydro-8-oxoguanine (8-oxoG). Has AP (apurinic/apyrimidinic) lyase activity and introduces nicks in the DNA strand. Cleaves the DNA backbone by beta-delta elimination to generate a single-strand break at the site of the removed base with both 3'- and 5'-phosphates. The chain is Formamidopyrimidine-DNA glycosylase from Lactobacillus gasseri (strain ATCC 33323 / DSM 20243 / BCRC 14619 / CIP 102991 / JCM 1131 / KCTC 3163 / NCIMB 11718 / NCTC 13722 / AM63).